The chain runs to 256 residues: Thiazole synthase (256 aa).

Residue lysine 96 is the Schiff-base intermediate with DXP of the active site. 1-deoxy-D-xylulose 5-phosphate contacts are provided by residues glycine 157, 184 to 185 (AG), and 206 to 207 (NT).

Belongs to the ThiG family. In terms of assembly, homotetramer. Forms heterodimers with either ThiH or ThiS.

Its subcellular location is the cytoplasm. It carries out the reaction [ThiS sulfur-carrier protein]-C-terminal-Gly-aminoethanethioate + 2-iminoacetate + 1-deoxy-D-xylulose 5-phosphate = [ThiS sulfur-carrier protein]-C-terminal Gly-Gly + 2-[(2R,5Z)-2-carboxy-4-methylthiazol-5(2H)-ylidene]ethyl phosphate + 2 H2O + H(+). It participates in cofactor biosynthesis; thiamine diphosphate biosynthesis. In terms of biological role, catalyzes the rearrangement of 1-deoxy-D-xylulose 5-phosphate (DXP) to produce the thiazole phosphate moiety of thiamine. Sulfur is provided by the thiocarboxylate moiety of the carrier protein ThiS. In vitro, sulfur can be provided by H(2)S. This is Thiazole synthase from Brucella abortus (strain S19).